We begin with the raw amino-acid sequence, 309 residues long: Probable manganese-dependent inorganic pyrophosphatase (309 aa).

Residues H9, D13, D15, D75, H97, and D149 each coordinate Mn(2+).

This sequence belongs to the PPase class C family. Mn(2+) serves as cofactor.

It is found in the cytoplasm. The catalysed reaction is diphosphate + H2O = 2 phosphate + H(+). This chain is Probable manganese-dependent inorganic pyrophosphatase, found in Bacillus velezensis (strain DSM 23117 / BGSC 10A6 / LMG 26770 / FZB42) (Bacillus amyloliquefaciens subsp. plantarum).